A 296-amino-acid polypeptide reads, in one-letter code: 4-hydroxy-tetrahydrodipicolinate synthase (296 aa).

Position 49 (T49) interacts with pyruvate. The active-site Proton donor/acceptor is Y137. Residue K166 is the Schiff-base intermediate with substrate of the active site. A pyruvate-binding site is contributed by I208.

The protein belongs to the DapA family. In terms of assembly, homotetramer; dimer of dimers.

The protein localises to the cytoplasm. The catalysed reaction is L-aspartate 4-semialdehyde + pyruvate = (2S,4S)-4-hydroxy-2,3,4,5-tetrahydrodipicolinate + H2O + H(+). Its pathway is amino-acid biosynthesis; L-lysine biosynthesis via DAP pathway; (S)-tetrahydrodipicolinate from L-aspartate: step 3/4. Catalyzes the condensation of (S)-aspartate-beta-semialdehyde [(S)-ASA] and pyruvate to 4-hydroxy-tetrahydrodipicolinate (HTPA). The chain is 4-hydroxy-tetrahydrodipicolinate synthase from Chlorobium phaeovibrioides (strain DSM 265 / 1930) (Prosthecochloris vibrioformis (strain DSM 265)).